Here is a 55-residue protein sequence, read N- to C-terminus: ATP synthase F(0) complex subunit 8 (55 aa).

The chain crosses the membrane as a helical span at residues 9–29 (WFAIMVFSWFVFLIFLPPKIM).

This sequence belongs to the ATPase protein 8 family. In terms of assembly, component of the ATP synthase complex composed at least of ATP5F1A/subunit alpha, ATP5F1B/subunit beta, ATP5MC1/subunit c (homooctomer), MT-ATP6/subunit a, MT-ATP8/subunit 8, ATP5ME/subunit e, ATP5MF/subunit f, ATP5MG/subunit g, ATP5MK/subunit k, ATP5MJ/subunit j, ATP5F1C/subunit gamma, ATP5F1D/subunit delta, ATP5F1E/subunit epsilon, ATP5PF/subunit F6, ATP5PB/subunit b, ATP5PD/subunit d, ATP5PO/subunit OSCP. ATP synthase complex consists of a soluble F(1) head domain (subunits alpha(3) and beta(3)) - the catalytic core - and a membrane F(0) domain - the membrane proton channel (subunits c, a, 8, e, f, g, k and j). These two domains are linked by a central stalk (subunits gamma, delta, and epsilon) rotating inside the F1 region and a stationary peripheral stalk (subunits F6, b, d, and OSCP).

It localises to the mitochondrion membrane. Subunit 8, of the mitochondrial membrane ATP synthase complex (F(1)F(0) ATP synthase or Complex V) that produces ATP from ADP in the presence of a proton gradient across the membrane which is generated by electron transport complexes of the respiratory chain. ATP synthase complex consist of a soluble F(1) head domain - the catalytic core - and a membrane F(1) domain - the membrane proton channel. These two domains are linked by a central stalk rotating inside the F(1) region and a stationary peripheral stalk. During catalysis, ATP synthesis in the catalytic domain of F(1) is coupled via a rotary mechanism of the central stalk subunits to proton translocation. In vivo, can only synthesize ATP although its ATP hydrolase activity can be activated artificially in vitro. Part of the complex F(0) domain. The polypeptide is ATP synthase F(0) complex subunit 8 (Tetraodon nigroviridis (Spotted green pufferfish)).